A 599-amino-acid polypeptide reads, in one-letter code: Sulfite reductase [NADPH] flavoprotein alpha-component (599 aa).

The Flavodoxin-like domain occupies 64 to 202 (ITLISASQTG…VAAQWRARIV (139 aa)). FMN-binding positions include 70–75 (SQTGNA), 117–120 (STQG), and 153–162 (LGDTSYEFFC). The 215-residue stretch at 234-448 (EAPLRASLSV…IEHNDNFRLP (215 aa)) folds into the FAD-binding FR-type domain. FAD-binding positions include Thr-322, Ala-356, 386 to 389 (RLYS), 404 to 406 (TVG), Tyr-410, and 419 to 422 (GGAS). NADP(+) is bound by residues 519–520 (SR), 525–529 (KIYVQ), and Asp-561. Tyr-599 lines the FAD pocket.

The protein belongs to the NADPH-dependent sulphite reductase flavoprotein subunit CysJ family. It in the N-terminal section; belongs to the flavodoxin family. This sequence in the C-terminal section; belongs to the flavoprotein pyridine nucleotide cytochrome reductase family. In terms of assembly, alpha(8)-beta(8). The alpha component is a flavoprotein, the beta component is a hemoprotein. The cofactor is FAD. It depends on FMN as a cofactor.

The enzyme catalyses hydrogen sulfide + 3 NADP(+) + 3 H2O = sulfite + 3 NADPH + 4 H(+). It functions in the pathway sulfur metabolism; hydrogen sulfide biosynthesis; hydrogen sulfide from sulfite (NADPH route): step 1/1. Component of the sulfite reductase complex that catalyzes the 6-electron reduction of sulfite to sulfide. This is one of several activities required for the biosynthesis of L-cysteine from sulfate. The flavoprotein component catalyzes the electron flow from NADPH -&gt; FAD -&gt; FMN to the hemoprotein component. The chain is Sulfite reductase [NADPH] flavoprotein alpha-component from Salmonella arizonae (strain ATCC BAA-731 / CDC346-86 / RSK2980).